The chain runs to 890 residues: MSTSSSRLFFDCGSLDWPNKSLFGDPTTRDVMDEHISSTWNAVIRRHMLAPNADAETILGRDGLPSAQFDAYGAMLPSFIQALNAPTTRLRISAPLSTAESILCADASHAPWLYMANSVCAYEATHLQPVQTFIAFNFAHGYCYLSLFIPLSFRITPENARSFSRFLEQLPDILGAYPTLASLYKTMLFAVRLFPEVLQAPIPIIAKRPGVLQFHVSDARGLPPSWFPMKCGSVASFIALITNNLNSDLLNGIVGSNGDGEHYTNWNSGHNHWIVNRFITVKDLHSSLKSALEVDLDTEGGRNAVLDLLLDLGVTNLVRREKRFPAYFQGAESVYLLLSCERVGNELVAVQDALQEPLANYTGKDLRALIINLGGLPSRHPEICYTRNIFENDNHLVWNFEFYRIASITKNAQIDRDVLSSSMANLFSDFVSESSNGEYRVKEPRPVTQYRVEHDEPVASGAPSAWWQVLVGITTAILGAIIFFLWRCFLRAKRVKFQAKDSFPWFTTSGDDDLPPPPGDSPSRPPGRSPDRVLPRTVVRDLSFNDDDDLHSVDLNEAGSRFGEVVSLIARGNLRELAGAIPESLSNLTLLQTSASGSGFYTMVALYLATLGDAITAFHEHNDASPATIQSLRTLELQLEARGLRFNEAGTPANLIQRGVKSSVGRALVRLTQSALLATGENFRTRMAATLERIAAERLNTLTAYDQRVIEMTTELLAAIKTALEVERSELTPHLANAEALLQVYNNLFSTDYASASLLALRREMILRSAEGRVGEQPTSASDAANEELVQRSMTKLDKEIELFQAQIDSQRRAVTITEASNLRENILQPINTVANIAMAGAFLRGGARHRMPGIPDVAAPMSNPFRAFSGRGHSLTTTRGAGLFRRPRV.

The region spanning 135–255 (AFNFAHGYCY…NSDLLNGIVG (121 aa)) is the Peptidase C6 domain. Residues C143 and H215 each act as for helper component proteinase activity in the active site. The segment at 508-533 (TSGDDDLPPPPGDSPSRPPGRSPDRV) is disordered. Positions 515–528 (PPPPGDSPSRPPGR) are enriched in pro residues.

It belongs to the bymoviruses polyprotein 2 family. The viral RNA2 of bymoviruses is expressed as a single polyprotein which undergoes post-translational proteolytic processing resulting in the production of at least two individual proteins. The HC-pro cleaves its C-terminus autocatalytically (Potential).

The enzyme catalyses Hydrolyzes a Gly-|-Gly bond at its own C-terminus, commonly in the sequence -Tyr-Xaa-Val-Gly-|-Gly, in the processing of the potyviral polyprotein.. In Barley yellow mosaic virus (isolate Germany) (BaYMV), this protein is Genome polyprotein 2 (RNA2).